A 223-amino-acid polypeptide reads, in one-letter code: MTADGGPDVRHGTRPEPSGDGRVVVLSGPSAVGKSTVVRCLRERVPNLHFSVSATTRAPRPGEVDGVDYHFVSPARFQQLIDEGALLEWAEIHSGLHRSGTLAAPVRAAVARGCPVLIEVDLAGARAVKKAMPEALTVFLAPPSWEDLEARLIGRGTETPEVIARRLQTARVEMAAQHDFDRVVVNSRLESACAELVSLLVGTAPDRHDTSGRTGRQTTSHPD.

Residues 1–22 are disordered; that stretch reads MTADGGPDVRHGTRPEPSGDGR. Residues 7 to 19 are compositionally biased toward basic and acidic residues; sequence PDVRHGTRPEPSG. Positions 21-201 constitute a Guanylate kinase-like domain; it reads GRVVVLSGPS…ACAELVSLLV (181 aa). Position 28–35 (28–35) interacts with ATP; the sequence is GPSAVGKS. The interval 204–223 is disordered; it reads APDRHDTSGRTGRQTTSHPD. The segment covering 212–223 has biased composition (polar residues); that stretch reads GRTGRQTTSHPD.

It belongs to the guanylate kinase family.

The protein resides in the cytoplasm. The enzyme catalyses GMP + ATP = GDP + ADP. Functionally, essential for recycling GMP and indirectly, cGMP. The chain is Guanylate kinase from Mycolicibacterium paratuberculosis (strain ATCC BAA-968 / K-10) (Mycobacterium paratuberculosis).